The following is a 259-amino-acid chain: 1,2-dihydroxy-1,2-dihydronaphthalene dehydrogenase (259 aa).

NAD(+) is bound by residues 8 to 35 and Asp58; that span reads AITG…SALV. Residue Ser140 coordinates substrate. Tyr153 (proton acceptor) is an active-site residue. Lys157 is an NAD(+) binding site.

The protein belongs to the short-chain dehydrogenases/reductases (SDR) family.

The enzyme catalyses (1R,2S)-1,2-dihydronaphthalene-1,2-diol + NAD(+) = naphthalene-1,2-diol + NADH + H(+). It functions in the pathway aromatic compound metabolism; naphthalene degradation. Catalyzes the oxidation of naphthalene dihydrodiol into 1,2-dihydroxynaphthalene. The chain is 1,2-dihydroxy-1,2-dihydronaphthalene dehydrogenase from Ralstonia sp.